The primary structure comprises 174 residues: ATP-dependent protease subunit HslV (174 aa).

Thr2 is an active-site residue. 3 residues coordinate Na(+): Ala156, Cys159, and Thr162.

This sequence belongs to the peptidase T1B family. HslV subfamily. As to quaternary structure, a double ring-shaped homohexamer of HslV is capped on each side by a ring-shaped HslU homohexamer. The assembly of the HslU/HslV complex is dependent on binding of ATP.

It is found in the cytoplasm. The enzyme catalyses ATP-dependent cleavage of peptide bonds with broad specificity.. Its activity is regulated as follows. Allosterically activated by HslU binding. Its function is as follows. Protease subunit of a proteasome-like degradation complex believed to be a general protein degrading machinery. In Agrobacterium fabrum (strain C58 / ATCC 33970) (Agrobacterium tumefaciens (strain C58)), this protein is ATP-dependent protease subunit HslV.